We begin with the raw amino-acid sequence, 392 residues long: Succinate--CoA ligase [ADP-forming] subunit beta (392 aa).

One can recognise an ATP-grasp domain in the interval 9-248 (KDILRKFGVA…ISEEDPFEVE (240 aa)). ATP contacts are provided by residues K50, 57-59 (GRG), E103, M106, and E111. 2 residues coordinate Mg(2+): N203 and D217. Residues N268 and 325-327 (GIV) contribute to the substrate site.

The protein belongs to the succinate/malate CoA ligase beta subunit family. In terms of assembly, heterotetramer of two alpha and two beta subunits. Mg(2+) serves as cofactor.

The catalysed reaction is succinate + ATP + CoA = succinyl-CoA + ADP + phosphate. The enzyme catalyses GTP + succinate + CoA = succinyl-CoA + GDP + phosphate. It functions in the pathway carbohydrate metabolism; tricarboxylic acid cycle; succinate from succinyl-CoA (ligase route): step 1/1. Succinyl-CoA synthetase functions in the citric acid cycle (TCA), coupling the hydrolysis of succinyl-CoA to the synthesis of either ATP or GTP and thus represents the only step of substrate-level phosphorylation in the TCA. The beta subunit provides nucleotide specificity of the enzyme and binds the substrate succinate, while the binding sites for coenzyme A and phosphate are found in the alpha subunit. The chain is Succinate--CoA ligase [ADP-forming] subunit beta from Chlorobium phaeobacteroides (strain DSM 266 / SMG 266 / 2430).